A 187-amino-acid chain; its full sequence is Large ribosomal subunit protein uL22 (187 aa).

The disordered stretch occupies residues 161 to 187 (APTDDAPAKKKLSKKKLARQKEKMMRE). The span at 169–178 (KKKLSKKKLA) shows a compositional bias: basic residues.

It belongs to the universal ribosomal protein uL22 family.

The protein is Large ribosomal subunit protein uL22 (RpL17) of Bombyx mori (Silk moth).